Consider the following 491-residue polypeptide: Angiopoietin-related protein 1 (491 aa).

The N-terminal stretch at Met-1–Gly-23 is a signal peptide. Positions Ile-80–Met-168 form a coiled coil. Residues Asn-160 and Asn-188 are each glycosylated (N-linked (GlcNAc...) asparagine). Residues Phe-271–Asp-491 enclose the Fibrinogen C-terminal domain. 2 disulfide bridges follow: Cys-280–Cys-309 and Cys-432–Cys-445.

The protein localises to the secreted. The protein is Angiopoietin-related protein 1 (ANGPTL1) of Bos taurus (Bovine).